We begin with the raw amino-acid sequence, 330 residues long: 1,8-cineole synthase (330 aa).

Asp81 provides a ligand contact to Mg(2+). Residues 81–85 (DDHFD) carry the DDXXD motif motif. Position 174 (Arg174) interacts with substrate. Mg(2+) is bound by residues Asn220 and Ser224. Positions 220-228 (NDVLSLEKE) match the NXXXSXXXE motif motif. Lys227 provides a ligand contact to substrate. Position 228 (Glu228) interacts with Mg(2+). 314 to 315 (RY) contributes to the substrate binding site.

This sequence belongs to the terpene synthase family. As to quaternary structure, homodimer. It depends on Mg(2+) as a cofactor.

The enzyme catalyses (2E)-geranyl diphosphate + H2O = 1,8-cineole + diphosphate. It carries out the reaction neryl diphosphate + H2O = 1,8-cineole + diphosphate. Functionally, in vitro, catalyzes the formation of 1,8-cineole from geranyl diphosphate (GPP). Can also accept neryl diphosphate (NPP) as substrate to produce 1,8-cineole. This is 1,8-cineole synthase from Streptomyces clavuligerus.